Consider the following 109-residue polypeptide: Hainantoxin-XVIII-3 (109 aa).

Residues M1 to A18 form the signal peptide. Positions F19–A46 are excised as a propeptide. Cystine bridges form between C47–C62, C55–C68, C59–C108, and C61–C81.

The protein belongs to the neurotoxin 25 family. F7 subfamily. Expressed by the venom gland.

The protein localises to the secreted. In terms of biological role, putative ion channel inhibitor. The protein is Hainantoxin-XVIII-3 of Cyriopagopus hainanus (Chinese bird spider).